A 342-amino-acid chain; its full sequence is MSRIIGRKGINYIHRLNSASFTSVSASSIEKGQNRVIDASLTLIRERAKLKGELVRLLGGAKASTSLLGVPLGHNSSFLQGPAFAPPRIREAIWCGSTNSATEEGKELKDPRVLTDVGDVPVQEIRDCGVDDDRLMNVISESVKLVMEEEPLRPLVLGGDHSISYPVVRAVSEKLGGPVDILHLDAHPDIYDCFEGNKYSHASSFARIMEGGYARRLLQVGIRSINQEGREQGKRFGVEQYEMRTFSKDRPMLENLKLGEGVKGVYISIDVDCLDPAFAPGVSHIEPGGLSFRDVLNILHNLQADVVGADVVEFNPQRDTVDGMTAMVAAKLVRELAAKISK.

Residues 1-22 constitute a mitochondrion transit peptide; the sequence is MSRIIGRKGINYIHRLNSASFT. L-ornithine is bound by residues S77 and 96-99; that span reads GSTN. H161, D185, H187, and D189 together coordinate Mn(2+). 189–191 is a binding site for L-ornithine; that stretch reads DIY. 195-197 is a binding site for substrate; that stretch reads EGN. S224 serves as a coordination point for L-ornithine. D270 and D272 together coordinate Mn(2+). Residue E313 participates in substrate binding.

The protein belongs to the arginase family. As to quaternary structure, forms homohexamers. The cofactor is Mn(2+). In terms of tissue distribution, expressed in vasculature of roots, root tips, cotyledons, leaves, cauline leaves, stems, sepals and pollen.

The protein localises to the mitochondrion. It carries out the reaction L-arginine + H2O = urea + L-ornithine. The catalysed reaction is agmatine + H2O = urea + putrescine. It participates in nitrogen metabolism; urea cycle; L-ornithine and urea from L-arginine: step 1/1. Its pathway is amine and polyamine biosynthesis; putrescine biosynthesis via agmatine pathway; putrescine from agmatine: step 1/1. In terms of biological role, catalyzes the hydrolysis of L-arginine to urea and L-ornithine. The latter can be utilized in the urea cycle or as a precursor for the synthesis of both polyamines and proline. Possesses agmatinase activity. Catalyzes the formation of putrescine from agmatine. The polypeptide is Arginase 1, mitochondrial (Arabidopsis thaliana (Mouse-ear cress)).